Here is a 485-residue protein sequence, read N- to C-terminus: MEIFDLTIHELHEKLKAKEVSSVEATRAMLDRIEAVDSQVNAYITVTPEQALVQAQDADRRIAAGEIAPLTGVPVGLKDIFVTKGIRTTCGSRILENFVPPYDGTAVAKLKEQGAVIVGKLNQDEFAMGSSNESSYFGPCRNPWDLSCTPGGSSGGSAAAIAARTATATLGTDTGGSIRQPASHCGCVGLKPTYGRVSRYGVIAYASSLDQVGPLTRDVTDSALLLGAVAGYDPMDSTSVNTPVPDYVAGLGKGVKGMKIGLPKQYFIEGLDPDVKRAMDEAIALYKSLGADIREVSLPNTEYAVATYYIIATAEASANLARYDGVRFGHRAENARGLAQMYSKSRAEGFGPEVKRRIMLGTYALSSGYYDAYYVKAQKVRTLIQQDFLNAFKEVDVLLTPIAPTPAFKIAEKLEDPLQMYLSDIFTIPVNLAGTCGISVPAGFSAAGLPIGLQLVGKPFGEQEILTAAYSFERETQWHLKKAPL.

Active-site charge relay system residues include K78 and S153. The Acyl-ester intermediate role is filled by S177.

Belongs to the amidase family. GatA subfamily. Heterotrimer of A, B and C subunits.

It catalyses the reaction L-glutamyl-tRNA(Gln) + L-glutamine + ATP + H2O = L-glutaminyl-tRNA(Gln) + L-glutamate + ADP + phosphate + H(+). Allows the formation of correctly charged Gln-tRNA(Gln) through the transamidation of misacylated Glu-tRNA(Gln) in organisms which lack glutaminyl-tRNA synthetase. The reaction takes place in the presence of glutamine and ATP through an activated gamma-phospho-Glu-tRNA(Gln). The polypeptide is Glutamyl-tRNA(Gln) amidotransferase subunit A (Geobacter sp. (strain M21)).